The sequence spans 218 residues: Non-structural protein NS3 (218 aa).

Belongs to the orbivirus NS3 family.

Functionally, may play a role in the release of virions from infected cells. In Camelus dromedarius (Dromedary), this protein is Non-structural protein NS3 (Segment-10).